Consider the following 344-residue polypeptide: Histone-lysine N-methyltransferase, H3 lysine-9 specific KMT1 (344 aa).

The 96-residue stretch at 79–174 (SGCSCAKDSE…DCPNRVVERG (96 aa)) folds into the Pre-SET domain. Zn(2+) is bound by residues Cys-81, Cys-83, Cys-89, Cys-94, Cys-96, Cys-156, Cys-160, Cys-162, Cys-166, and Cys-272. One can recognise an SET domain in the interval 177–312 (IPLEIFRTPD…EGEELTFDYV (136 aa)). S-adenosyl-L-methionine is bound at residue Tyr-311. One can recognise a Post-SET domain in the interval 328–344 (HMTRCLCGSKKCRKFLW). Zn(2+)-binding residues include Cys-332, Cys-334, and Cys-339.

Belongs to the class V-like SAM-binding methyltransferase superfamily.

The protein resides in the chromosome. It catalyses the reaction L-lysyl(9)-[histone H3] + 3 S-adenosyl-L-methionine = N(6),N(6),N(6)-trimethyl-L-lysyl(9)-[histone H3] + 3 S-adenosyl-L-homocysteine + 3 H(+). Its function is as follows. Histone methyltransferase that specifically trimethylates histone H3 to form H3K9me3. H3K9me3 marks chromatin regions for DNA methylation. Plays a key role in the regulation of the biosynthesis of the gamma-pyrones fusapyrone (FPY) and deoxyfusapyrone (dFPY). This Fusarium mangiferae (Mango malformation disease fungus) protein is Histone-lysine N-methyltransferase, H3 lysine-9 specific KMT1.